We begin with the raw amino-acid sequence, 297 residues long: F-box only protein 2 (297 aa).

Residues 1–47 (MDGDGDPESVSHPEEASPEEQPEEAGAEASAEEEQLREAEEEEEAEA) are disordered. Acidic residues predominate over residues 16-47 (ASPEEQPEEAGAEASAEEEQLREAEEEEEAEA). One can recognise an F-box domain in the interval 48 to 95 (VEYLAELPEPLLLRVLAELPATELVQACRLVCLRWKELVDGAPLWLLK). Ser-106 is subject to Phosphoserine. The region spanning 117–297 (FYFLSKRRRN…VTNSSVWVEP (181 aa)) is the FBA domain. Residues 214-216 (RTD) and 279-280 (YW) contribute to the a carbohydrate site.

Component of the SCF(FBXO2) complex consisting of CUL1, RBX1, SKP1 and FBXO2. Predominantly detected as heterodimer with SKP1; the heterodimer with SKP1 is not part of the SCF(FBXO2) complex. As to expression, detected in brain and cochlea, in epithelial support cells and hair cells of the organ of Corti (at protein level).

The protein resides in the cytoplasm. It is found in the microsome membrane. Its pathway is protein modification; protein ubiquitination. In terms of biological role, substrate recognition component of a SCF (SKP1-CUL1-F-box protein) E3 ubiquitin-protein ligase complex that mediates the ubiquitination and subsequent proteasomal degradation of target proteins. Involved in the endoplasmic reticulum-associated degradation pathway (ERAD) for misfolded lumenal proteins by recognizing and binding sugar chains on unfolded glycoproteins that are retrotranslocated into the cytosol and promoting their ubiquitination and subsequent degradation. Prevents formation of cytosolic aggregates of unfolded glycoproteins that have been retrotranslocated into the cytosol. Able to recognize and bind denatured glycoproteins, preferentially those of the high-mannose type. The chain is F-box only protein 2 (Fbxo2) from Mus musculus (Mouse).